The sequence spans 526 residues: Peptide chain release factor 3 (526 aa).

Residues 9–277 (NKRRTFAIIS…DFVEYAPGPQ (269 aa)) form the tr-type G domain. GTP-binding positions include 18–25 (SHPDAGKT), 86–90 (DTPGH), and 140–143 (NKLD).

The protein belongs to the TRAFAC class translation factor GTPase superfamily. Classic translation factor GTPase family. PrfC subfamily.

The protein resides in the cytoplasm. In terms of biological role, increases the formation of ribosomal termination complexes and stimulates activities of RF-1 and RF-2. It binds guanine nucleotides and has strong preference for UGA stop codons. It may interact directly with the ribosome. The stimulation of RF-1 and RF-2 is significantly reduced by GTP and GDP, but not by GMP. The sequence is that of Peptide chain release factor 3 from Legionella pneumophila (strain Paris).